Here is a 244-residue protein sequence, read N- to C-terminus: 5-oxoprolinase subunit A (244 aa).

Belongs to the LamB/PxpA family. As to quaternary structure, forms a complex composed of PxpA, PxpB and PxpC.

The catalysed reaction is 5-oxo-L-proline + ATP + 2 H2O = L-glutamate + ADP + phosphate + H(+). Catalyzes the cleavage of 5-oxoproline to form L-glutamate coupled to the hydrolysis of ATP to ADP and inorganic phosphate. In Shigella boydii serotype 18 (strain CDC 3083-94 / BS512), this protein is 5-oxoprolinase subunit A.